We begin with the raw amino-acid sequence, 251 residues long: Gamma-interferon-inducible lysosomal thiol reductase (251 aa).

The N-terminal stretch at 1–21 (MFGFRLSVLLFAVCSLSACSC) is a signal peptide. Positions 22-60 (MFVNSCKYPPSQWCDSRDIAAQCGVLEQCMKFNASPVTV) constitute a Saposin A-type domain. A disulfide bond links Cys68 and Cys71. Asn108 carries N-linked (GlcNAc...) asparagine glycosylation.

The protein belongs to the GILT family. As to quaternary structure, dimer; disulfide-linked. Highly expressed in spleen and kidney. Also detected at lower levels in liver, heart, brain, intestine and gill.

It localises to the secreted. Its subcellular location is the lysosome. In terms of biological role, lysosomal thiol reductase that can reduce protein disulfide bonds. May facilitate the complete unfolding of proteins destined for lysosomal degradation. Plays an important role in antigen processing. The polypeptide is Gamma-interferon-inducible lysosomal thiol reductase (Carassius auratus (Goldfish)).